We begin with the raw amino-acid sequence, 273 residues long: Aspartate/glutamate leucyltransferase (273 aa).

The protein belongs to the R-transferase family. Bpt subfamily.

The protein resides in the cytoplasm. It catalyses the reaction N-terminal L-glutamyl-[protein] + L-leucyl-tRNA(Leu) = N-terminal L-leucyl-L-glutamyl-[protein] + tRNA(Leu) + H(+). The catalysed reaction is N-terminal L-aspartyl-[protein] + L-leucyl-tRNA(Leu) = N-terminal L-leucyl-L-aspartyl-[protein] + tRNA(Leu) + H(+). Functionally, functions in the N-end rule pathway of protein degradation where it conjugates Leu from its aminoacyl-tRNA to the N-termini of proteins containing an N-terminal aspartate or glutamate. The protein is Aspartate/glutamate leucyltransferase of Ruegeria pomeroyi (strain ATCC 700808 / DSM 15171 / DSS-3) (Silicibacter pomeroyi).